Here is an 860-residue protein sequence, read N- to C-terminus: Leucine--tRNA ligase (860 aa).

The 'HIGH' region motif lies at 42 to 52; it reads PYPSGRLHMGH. A 'KMSKS' region motif is present at residues 619 to 623; that stretch reads KMSKS. Lys622 contributes to the ATP binding site.

It belongs to the class-I aminoacyl-tRNA synthetase family.

Its subcellular location is the cytoplasm. It carries out the reaction tRNA(Leu) + L-leucine + ATP = L-leucyl-tRNA(Leu) + AMP + diphosphate. This chain is Leucine--tRNA ligase, found in Histophilus somni (strain 2336) (Haemophilus somnus).